The sequence spans 468 residues: 6-phosphogluconate dehydrogenase, decarboxylating (468 aa).

NADP(+) contacts are provided by residues 10 to 15 (GMAVMG), 33 to 35 (NRS), 74 to 76 (VKA), and Asn-102. Residues Asn-102 and 128–130 (SGG) each bind substrate. The active-site Proton acceptor is the Lys-183. 186 to 187 (HN) is a substrate binding site. Glu-190 (proton donor) is an active-site residue. Residues Tyr-191, Lys-260, Arg-287, Arg-445, and His-451 each contribute to the substrate site.

It belongs to the 6-phosphogluconate dehydrogenase family. In terms of assembly, homodimer.

It catalyses the reaction 6-phospho-D-gluconate + NADP(+) = D-ribulose 5-phosphate + CO2 + NADPH. The protein operates within carbohydrate degradation; pentose phosphate pathway; D-ribulose 5-phosphate from D-glucose 6-phosphate (oxidative stage): step 3/3. In terms of biological role, catalyzes the oxidative decarboxylation of 6-phosphogluconate to ribulose 5-phosphate and CO(2), with concomitant reduction of NADP to NADPH. The chain is 6-phosphogluconate dehydrogenase, decarboxylating (gnd) from Escherichia coli.